An 867-amino-acid chain; its full sequence is Valine--tRNA ligase (867 aa).

The short motif at 42 to 52 (PNITGKIHMGH) is the 'HIGH' region element. The short motif at 521–525 (KMSKS) is the 'KMSKS' region element. Residue lysine 524 coordinates ATP. The stretch at 794-867 (LGTLIDVKSE…QIISDLEAKA (74 aa)) forms a coiled coil.

Belongs to the class-I aminoacyl-tRNA synthetase family. ValS type 1 subfamily. As to quaternary structure, monomer.

The protein resides in the cytoplasm. It catalyses the reaction tRNA(Val) + L-valine + ATP = L-valyl-tRNA(Val) + AMP + diphosphate. Catalyzes the attachment of valine to tRNA(Val). As ValRS can inadvertently accommodate and process structurally similar amino acids such as threonine, to avoid such errors, it has a 'posttransfer' editing activity that hydrolyzes mischarged Thr-tRNA(Val) in a tRNA-dependent manner. The polypeptide is Valine--tRNA ligase (Fervidobacterium nodosum (strain ATCC 35602 / DSM 5306 / Rt17-B1)).